Consider the following 826-residue polypeptide: Ferric-pyoverdine M114 receptor PbuA (826 aa).

Residues 1-44 (MSASRFMLRPLTRALLMHGATRTRLAGTGLGLALTLTAAPYVQA) form the signal peptide. A TonB box motif is present at residues 110–119 (DGNTVTVLGP). Positions 160–271 (SLKETPQSVT…TAGGVNFVRK (112 aa)) constitute a TBDR plug domain. Residues 276 to 826 (TAHTQLSLSA…NFVMSVKADF (551 aa)) enclose the TBDR beta-barrel domain. The short motif at 809 to 826 (GNFYGDPRNFVMSVKADF) is the TonB C-terminal box element.

It belongs to the TonB-dependent receptor family.

It is found in the cell outer membrane. Functionally, specific receptor for the siderophore ferric pyoverdine (pseudobactin) M114. The sequence is that of Ferric-pyoverdine M114 receptor PbuA (pbuA) from Pseudomonas sp. (strain M114).